Consider the following 550-residue polypeptide: CTP synthase (550 aa).

An amidoligase domain region spans residues 1–277; the sequence is MNGSADAGPR…GRAVERALGL (277 aa). Ser23 is a binding site for CTP. UTP is bound at residue Ser23. 24–29 lines the ATP pocket; it reads SLGKGI. Tyr64 contacts L-glutamine. Asp81 is an ATP binding site. 2 residues coordinate Mg(2+): Asp81 and Glu151. Residues 158 to 160, 198 to 203, and Lys234 contribute to the CTP site; these read DIE and KTKPTQ. Residues 198 to 203 and Lys234 contribute to the UTP site; that span reads KTKPTQ. The 248-residue stretch at 302–549 folds into the Glutamine amidotransferase type-1 domain; sequence KIAIAGKYVK…VEAALAYQER (248 aa). Gly364 lines the L-glutamine pocket. Residue Cys391 is the Nucleophile; for glutamine hydrolysis of the active site. L-glutamine contacts are provided by residues 392-395, Glu415, and Arg472; that span reads LGLQ. Catalysis depends on residues His522 and Glu524.

Belongs to the CTP synthase family. As to quaternary structure, homotetramer.

The enzyme catalyses UTP + L-glutamine + ATP + H2O = CTP + L-glutamate + ADP + phosphate + 2 H(+). It catalyses the reaction L-glutamine + H2O = L-glutamate + NH4(+). It carries out the reaction UTP + NH4(+) + ATP = CTP + ADP + phosphate + 2 H(+). The protein operates within pyrimidine metabolism; CTP biosynthesis via de novo pathway; CTP from UDP: step 2/2. Allosterically activated by GTP, when glutamine is the substrate; GTP has no effect on the reaction when ammonia is the substrate. The allosteric effector GTP functions by stabilizing the protein conformation that binds the tetrahedral intermediate(s) formed during glutamine hydrolysis. Inhibited by the product CTP, via allosteric rather than competitive inhibition. Functionally, catalyzes the ATP-dependent amination of UTP to CTP with either L-glutamine or ammonia as the source of nitrogen. Regulates intracellular CTP levels through interactions with the four ribonucleotide triphosphates. The protein is CTP synthase of Thermus thermophilus (strain ATCC BAA-163 / DSM 7039 / HB27).